The primary structure comprises 519 residues: Putative tyrosine carboxypeptidase MATCAP2 (519 aa).

Positions 63-103 are disordered; that stretch reads SKEEKKHRSQKRFSSASSKQHRKPSKSPSSSHSKDPSRMTA. Position 330 (His330) interacts with Zn(2+). Residue Glu331 is the Nucleophile of the active site. Zn(2+) is bound by residues His335 and Glu366.

It depends on Zn(2+) as a cofactor.

Its function is as follows. Putative tyrosine carboxypeptidase. The protein is Putative tyrosine carboxypeptidase MATCAP2 of Mus musculus (Mouse).